The chain runs to 481 residues: MVENQKAMPQPEMRRIRRIHFVGIGGVGMCGIAEVLLNLGYQVSGSDLKESPVTDRLKSFGAQIFIGHRAENAAEADVLVVSSAVNTSNPEVATALERRIPVVPRAEMLAELMRYRHGIAVAGTHGKTTTTSLIASVFAAGGLDPTFVIGGRLNAAGTNAQLGTSRYLIAEADESDASFLHLQPLVAVVTNIDADHMATYDGDFNKLKKTFVEFLHNLPFYGLAVVCLDDPVVREILPQVKRPTVTYGFSEDADVRAINVRQEGMQTYFTVLRPDREPLDVSVNMPGNHNVLNSLATICIATDEGVSDEAIVEGLSRFAGVGRRFQVYGQLPVEGGDVMLVDDYGHHPTEVAAVIKAVRGGWPERRLVMVYQPHRYSRTRDLYDDFVNVLADANVLLLMEVYPAGEEPIPGADSRKLCNSIRQRGQLDPIYIERGVDLAPIVKPLLRAGDILLCQGAGDIGGLAPKLLASPLFAAAQGKSK.

123 to 129 (GTHGKTT) contributes to the ATP binding site.

Belongs to the MurCDEF family.

The protein localises to the cytoplasm. The enzyme catalyses UDP-N-acetyl-alpha-D-muramate + L-alanine + ATP = UDP-N-acetyl-alpha-D-muramoyl-L-alanine + ADP + phosphate + H(+). It functions in the pathway cell wall biogenesis; peptidoglycan biosynthesis. In terms of biological role, cell wall formation. The protein is UDP-N-acetylmuramate--L-alanine ligase of Pseudomonas fluorescens (strain SBW25).